The sequence spans 189 residues: Adenylate kinase (189 aa).

11–16 lines the ATP pocket; the sequence is GSGKGT. Residues 31-60 are NMP; the sequence is STGDVLRAEIKNGTELGKTAKGYIDQGQLI. AMP-binding positions include threonine 32, arginine 37, 58–60, 86–89, and glutamine 93; these read QLI and GFPR. The segment at 127 to 137 is LID; it reads KRGKDSGRADD. Residue arginine 128 coordinates ATP. AMP-binding residues include arginine 134 and arginine 145. Glycine 173 is a binding site for ATP.

The protein belongs to the adenylate kinase family. Monomer.

It localises to the cytoplasm. It carries out the reaction AMP + ATP = 2 ADP. Its pathway is purine metabolism; AMP biosynthesis via salvage pathway; AMP from ADP: step 1/1. Functionally, catalyzes the reversible transfer of the terminal phosphate group between ATP and AMP. Plays an important role in cellular energy homeostasis and in adenine nucleotide metabolism. This Bacteroides thetaiotaomicron (strain ATCC 29148 / DSM 2079 / JCM 5827 / CCUG 10774 / NCTC 10582 / VPI-5482 / E50) protein is Adenylate kinase.